We begin with the raw amino-acid sequence, 862 residues long: Leucine--tRNA ligase (862 aa).

Residues 51-61 carry the 'HIGH' region motif; the sequence is PYPSGSLHMGH. The 'KMSKS' region motif lies at 624–628; it reads KMSKS. An ATP-binding site is contributed by Lys627.

Belongs to the class-I aminoacyl-tRNA synthetase family.

It localises to the cytoplasm. The enzyme catalyses tRNA(Leu) + L-leucine + ATP = L-leucyl-tRNA(Leu) + AMP + diphosphate. The sequence is that of Leucine--tRNA ligase from Prochlorococcus marinus (strain NATL2A).